Reading from the N-terminus, the 1053-residue chain is MKRNYILGLDIGITSVGYGIIDYETRDVIDAGVRLFKEANVENNEGRRSKRGARRLKRRRRHRIQRVKKLLFDYNLLTDHSELSGINPYEARVKGLSQKLSEEEFSAALLHLAKRRGVHNVNEVEEDTGNELSTKEQISRNSKALEEKYVAELQLERLKKDGEVRGSINRFKTSDYVKEAKQLLKVQKAYHQLDQSFIDTYIDLLETRRTYYEGPGEGSPFGWKDIKEWYEMLMGHCTYFPEELRSVKYAYNADLYNALNDLNNLVITRDENEKLEYYEKFQIIENVFKQKKKPTLKQIAKEILVNEEDIKGYRVTSTGKPEFTNLKVYHDIKDITARKEIIENAELLDQIAKILTIYQSSEDIQEELTNLNSELTQEEIEQISNLKGYTGTHNLSLKAINLILDELWHTNDNQIAIFNRLKLVPKKVDLSQQKEIPTTLVDDFILSPVVKRSFIQSIKVINAIIKKYGLPNDIIIELAREKNSKDAQKMINEMQKRNRQTNERIEEIIRTTGKENAKYLIEKIKLHDMQEGKCLYSLEAIPLEDLLNNPFNYEVDHIIPRSVSFDNSFNNKVLVKQEENSKKGNRTPFQYLSSSDSKISYETFKKHILNLAKGKGRISKTKKEYLLEERDINRFSVQKDFINRNLVDTRYATRGLMNLLRSYFRVNNLDVKVKSINGGFTSFLRRKWKFKKERNKGYKHHAEDALIIANADFIFKEWKKLDKAKKVMENQMFEEKQAESMPEIETEQEYKEIFITPHQIKHIKDFKDYKYSHRVDKKPNRELINDTLYSTRKDDKGNTLIVNNLNGLYDKDNDKLKKLINKSPEKLLMYHHDPQTYQKLKLIMEQYGDEKNPLYKYYEETGNYLTKYSKKDNGPVIKKIKYYGNKLNAHLDITDDYPNSRNKVVKLSLKPYRFDVYLDNGVYKFVTVKNLDVIKKENYYEVNSKCYEEAKKLKKISNQAEFIASFYNNDLIKINGELYRVIGVNNDLLNRIEVNMIDITYREYLENMNDKRPPRIIKTIASKTQSIKKYSTDILGNLYEVKSKKHPQIIKKG.

A ruvC-I region spans residues 1–41; that stretch reads MKRNYILGLDIGITSVGYGIIDYETRDVIDAGVRLFKEANV. The For RuvC-like nuclease domain role is filled by Asp-10. Asp-10 provides a ligand contact to Mg(2+). The tract at residues 41-426 is recognition lobe; it reads VENNEGRRSK…IFNRLKLVPK (386 aa). Residues 435-481 are ruvC-II; that stretch reads EIPTTLVDDFILSPVVKRSFIQSIKVINAIIKKYGLPNDIIIELARE. Mg(2+)-binding residues include Glu-477 and Glu-481. The region spanning 480-646 is the HNH Cas9-type domain; sequence REKNSKDAQK…VQKDFINRNL (167 aa). His-557 (proton acceptor for HNH nuclease domain) is an active-site residue. Residues 650-775 form a ruvC-III region; sequence RYATRGLMNL…FKDYKYSHRV (126 aa). A Mg(2+)-binding site is contributed by His-701. Tyr-789 is a binding site for RNA. PAM substrate-binding regions lie at residues 882–889 and 985–993; these read YYGNKLNA and NNDLLNRIE. The tract at residues 910-1053 is PAM-interacting domain (PI); that stretch reads KPYRFDVYLD…KKHPQIIKKG (144 aa).

It belongs to the CRISPR-associated Cas9 family. Subtype II-A subfamily. Monomer. Binds crRNA and tracrRNA. Requires Mg(2+) as cofactor.

In terms of biological role, CRISPR (clustered regularly interspaced short palindromic repeat) is an adaptive immune system that provides protection against mobile genetic elements (viruses, transposable elements and conjugative plasmids). CRISPR clusters contain spacers, sequences complementary to antecedent mobile elements, and target invading nucleic acids. CRISPR clusters are transcribed and processed into CRISPR RNA (crRNA). In type II CRISPR systems correct processing of pre-crRNA requires a trans-encoded small RNA (tracrRNA), endogenous ribonuclease 3 (rnc) and this protein. The tracrRNA serves as a guide for ribonuclease 3-aided processing of pre-crRNA. Subsequently Cas9/crRNA/tracrRNA endonucleolytically cleaves linear or circular dsDNA target complementary to the spacer; Cas9 is inactive in the absence of the 2 guide RNAs (gRNA). Cas9 recognizes the protospacer adjacent motif (PAM) in the CRISPR repeat sequences to help distinguish self versus nonself, as targets within the bacterial CRISPR locus do not have PAMs. PAM recognition is also required for catalytic activity. In Staphylococcus aureus, this protein is CRISPR-associated endonuclease Cas9.